A 200-amino-acid polypeptide reads, in one-letter code: Small ribosomal subunit protein uS4 (200 aa).

A disordered region spans residues 22 to 43 (TGKELQKRPYPPGQHGPSQRRK). In terms of domain architecture, S4 RNA-binding spans 92-152 (SRLDNLVYRL…EKSRNLQVIK (61 aa)).

It belongs to the universal ribosomal protein uS4 family. Part of the 30S ribosomal subunit. Contacts protein S5. The interaction surface between S4 and S5 is involved in control of translational fidelity.

Its function is as follows. One of the primary rRNA binding proteins, it binds directly to 16S rRNA where it nucleates assembly of the body of the 30S subunit. Functionally, with S5 and S12 plays an important role in translational accuracy. The sequence is that of Small ribosomal subunit protein uS4 from Geobacillus sp. (strain WCH70).